Reading from the N-terminus, the 160-residue chain is Cytochrome c-type biogenesis protein CcmE (160 aa).

Topologically, residues 1 to 7 (MTRKQRR) are cytoplasmic. The chain crosses the membrane as a helical; Signal-anchor for type II membrane protein span at residues 8 to 28 (LFMIFGALGTLGVAVGLILFA). The Periplasmic segment spans residues 29-160 (LSDNIVFFYG…TQGAAAPLIR (132 aa)). Positions 122 and 126 each coordinate heme. The disordered stretch occupies residues 140-160 (VWQEDGQAKPATQGAAAPLIR).

This sequence belongs to the CcmE/CycJ family.

The protein resides in the cell inner membrane. Its function is as follows. Heme chaperone required for the biogenesis of c-type cytochromes. Transiently binds heme delivered by CcmC and transfers the heme to apo-cytochromes in a process facilitated by CcmF and CcmH. The protein is Cytochrome c-type biogenesis protein CcmE of Beijerinckia indica subsp. indica (strain ATCC 9039 / DSM 1715 / NCIMB 8712).